The following is a 202-amino-acid chain: Large ribosomal subunit protein eL13 (202 aa).

It belongs to the eukaryotic ribosomal protein eL13 family.

The polypeptide is Large ribosomal subunit protein eL13 (RPL13) (Nicotiana tabacum (Common tobacco)).